A 334-amino-acid polypeptide reads, in one-letter code: HTH-type transcriptional repressor PurR (334 aa).

The region spanning 2–56 (ATIKDVARLAGVSTTTVSHVINKTRFVAEATQEKVMKAVDELNYAPSAVARSLKC) is the HTH lacI-type domain. The segment at residues 4 to 23 (IKDVARLAGVSTTTVSHVIN) is a DNA-binding region (H-T-H motif). Residues 48 to 56 (SAVARSLKC) mediate DNA binding. F73, K189, F220, and D274 together coordinate hypoxanthine.

In terms of assembly, homodimer.

The protein operates within purine metabolism; purine nucleotide biosynthesis [regulation]. Is the main repressor of the genes involved in the de novo synthesis of purine nucleotides, regulating purB, purC, purEK, purF, purHD, purL, purMN and guaBA expression. PurR is allosterically activated to bind its cognate DNA by binding the purine corepressors, hypoxanthine or guanine, thereby effecting transcription repression. The chain is HTH-type transcriptional repressor PurR from Vibrio parahaemolyticus serotype O3:K6 (strain RIMD 2210633).